The primary structure comprises 133 residues: Small ribosomal subunit protein uS8 (133 aa).

It belongs to the universal ribosomal protein uS8 family. In terms of assembly, part of the 30S ribosomal subunit. Contacts proteins S5 and S12.

In terms of biological role, one of the primary rRNA binding proteins, it binds directly to 16S rRNA central domain where it helps coordinate assembly of the platform of the 30S subunit. This is Small ribosomal subunit protein uS8 from Syntrophus aciditrophicus (strain SB).